Consider the following 176-residue polypeptide: Calponin-1 (176 aa).

Residues 22–125 (PQTERQLRVW…STLIALASQA (104 aa)) form the Calponin-homology (CH) domain. The stretch at 158–176 (IGLQMGTNKFASQQGMTAY) is one Calponin-like repeat. Thr164 is subject to Phosphothreonine; by ROCK2. Ser169 carries the post-translational modification Phosphoserine; by ROCK2. Thr174 bears the Phosphothreonine; by ROCK2 mark.

Belongs to the calponin family. Smooth muscle, and tissues containing significant amounts of smooth muscle.

In terms of biological role, thin filament-associated protein that is implicated in the regulation and modulation of smooth muscle contraction. It is capable of binding to actin, calmodulin and tropomyosin. The interaction of calponin with actin inhibits the actomyosin Mg-ATPase activity. This chain is Calponin-1 (CNN1), found in Meleagris gallopavo (Wild turkey).